A 1120-amino-acid chain; its full sequence is Probable leucine-rich repeat receptor-like protein kinase At1g35710 (1120 aa).

The signal sequence occupies residues 1-29; the sequence is MGFAEKNLYDFRFLLFISIILSCSISASA. At 30–783 the chain is on the extracellular side; that stretch reads TIAEANALLK…RELKKPKKNG (754 aa). Residues Asn46, Asn60, Asn83, and Asn124 are each glycosylated (N-linked (GlcNAc...) asparagine). LRR repeat units follow at residues 78–100, 103–125, 127–150, 151–172, 175–198, 199–221, 223–246, 247–269, 271–294, 295–317, 319–342, 343–365, 367–389, 391–412, 415–437, 439–461, 463–484, 487–510, 535–557, 559–581, 583–605, 607–630, 631–652, 655–677, 678–701, 702–723, and 726–748; these read SIEE…PFIS, NLAY…FGNL, KLIY…GNLK, NLTV…ELGN, SMTD…GNLK, NLMV…LGNM, NLMV…IGNM, SMTN…GNLK, NLTL…LGNI, SMID…GNLK, NLTI…LGNM, SMID…FGNL, NLTY…ELGN, SMIN…FGNF, KLES…VANS, HLTT…TVCK, KLQN…RDCK, DLNF…WEKS, KLGA…IWNM, QLVE…IGNL, NLSR…SFLT, NLES…TFDS, KLHD…SKLT, QLTQ…SSLQ, SLDK…TFEG, and ALTN…PTFR. An N-linked (GlcNAc...) asparagine glycan is attached at Asn151. The N-linked (GlcNAc...) asparagine glycan is linked to Asn295. N-linked (GlcNAc...) asparagine glycosylation is present at Asn343. N-linked (GlcNAc...) asparagine glycosylation is found at Asn391, Asn436, Asn460, Asn473, and Asn490. 6 N-linked (GlcNAc...) asparagine glycosylation sites follow: Asn569, Asn580, Asn604, Asn607, Asn641, and Asn660. Asn712 is a glycosylation site (N-linked (GlcNAc...) asparagine). Residues 784 to 804 form a helical membrane-spanning segment; that stretch reads NLVVWILVPILGVLVILSICA. Residues 805 to 1120 lie on the Cytoplasmic side of the membrane; the sequence is NTFTYCIRKR…TMLSISTTFS (316 aa). Position 848 is a phosphothreonine (Thr848). The Protein kinase domain occupies 851 to 1120; it reads FDPTHLIGTG…TMLSISTTFS (270 aa). ATP-binding positions include 857–865 and Lys878; that span reads IGTGGYSKV. A phosphotyrosine mark is found at Tyr929 and Tyr968. Residue Asp981 is the Proton acceptor of the active site. The residue at position 1014 (Ser1014) is a Phosphoserine. Phosphotyrosine occurs at positions 1022 and 1029. At Thr1030 the chain carries Phosphothreonine.

Belongs to the protein kinase superfamily. Ser/Thr protein kinase family.

It localises to the membrane. It carries out the reaction L-seryl-[protein] + ATP = O-phospho-L-seryl-[protein] + ADP + H(+). It catalyses the reaction L-threonyl-[protein] + ATP = O-phospho-L-threonyl-[protein] + ADP + H(+). The chain is Probable leucine-rich repeat receptor-like protein kinase At1g35710 from Arabidopsis thaliana (Mouse-ear cress).